A 109-amino-acid polypeptide reads, in one-letter code: Spermidine export protein MdtI (109 aa).

The next 4 membrane-spanning stretches (helical) occupy residues 6–26 (WIHGAWLGLAIVLEIAANVLL), 36–56 (CYGILSLAAVLAAFSALSQAV), 64–84 (AYALWGGFGIAATLAAGWVLF), and 88–108 (LNPKGWVGVILLLAGMVMIKF).

The protein belongs to the drug/metabolite transporter (DMT) superfamily. Small multidrug resistance (SMR) (TC 2.A.7.1) family. MdtI subfamily. Forms a complex with MdtJ.

The protein resides in the cell inner membrane. Catalyzes the excretion of spermidine. The polypeptide is Spermidine export protein MdtI (Salmonella paratyphi A (strain ATCC 9150 / SARB42)).